Consider the following 499-residue polypeptide: Tyrosine-protein kinase Blk (499 aa).

Residues 1 to 34 (MGLLSSKRQVSEKGKGWSPVKIRTQDKAPPPLPP) form a disordered region. A lipid anchor (N-myristoyl glycine) is attached at glycine 2. Residues 52 to 112 (EEERFVVALF…PSNFVAPVET (61 aa)) enclose the SH3 domain. The SH2 domain occupies 118–214 (WFFRTISRKD…GLCQKLTLPC (97 aa)). A Protein kinase domain is found at 235–488 (LKLVRKLGSG…FLQSVLEDFY (254 aa)). ATP-binding positions include 241–249 (LGSGQFGEV) and lysine 263. Aspartate 354 (proton acceptor) is an active-site residue. The residue at position 383 (tyrosine 383) is a Phosphotyrosine; by autocatalysis.

It belongs to the protein kinase superfamily. Tyr protein kinase family. SRC subfamily. Interacts with CBL (via SH2 domain). Interacts with CD79A and CD79B (via SH2 domain). Phosphorylated on tyrosine residues after antibody-mediated surface engagement of the B-cell antigen receptor (BCR). In terms of processing, ubiquitination of activated BLK by the UBE3A ubiquitin protein ligase leads to its degradation by the ubiquitin-proteasome pathway. As to expression, expressed in immature Vgamma2 gamma-delta T-cells (at protein level). Expressed in the B-cell lineage.

The protein resides in the cell membrane. It carries out the reaction L-tyrosyl-[protein] + ATP = O-phospho-L-tyrosyl-[protein] + ADP + H(+). Its activity is regulated as follows. Antibody-mediated surface engagement of the B-cell antigen receptor (BCR) which results in the phosphorylation of BLK on tyrosine residues, stimulates the enzymatic activity. Non-receptor tyrosine kinase involved in B-lymphocyte development, differentiation and signaling. B-cell receptor (BCR) signaling requires a tight regulation of several protein tyrosine kinases and phosphatases, and associated coreceptors. Binding of antigen to the B-cell antigen receptor (BCR) triggers signaling that ultimately leads to B-cell activation. Signaling through BLK plays an important role in transmitting signals through surface immunoglobulins and supports the pro-B to pre-B transition, as well as the signaling for growth arrest and apoptosis downstream of B-cell receptor. Specifically binds and phosphorylates CD79A at 'Tyr-188'and 'Tyr-199', as well as CD79B at 'Tyr-196' and 'Tyr-207'. Also phosphorylates the immunoglobulin G receptor FCGR2. With FYN and LYN, plays an essential role in pre-B-cell receptor (pre-BCR)-mediated NF-kappa-B activation. Also contributes to BTK activation by indirectly stimulating BTK intramolecular autophosphorylation. In pancreatic islets, acts as a modulator of beta-cells function through the up-regulation of PDX1 and NKX6-1 and consequent stimulation of insulin secretion in response to glucose. Phosphorylates CGAS, promoting retention of CGAS in the cytosol. This chain is Tyrosine-protein kinase Blk (Blk), found in Mus musculus (Mouse).